We begin with the raw amino-acid sequence, 650 residues long: MFTFLKIILWLFSLALASAININDITFSNLEITPLTANKQPDQGWTATFDFSIADASSIREGDEFTLSMPHVYRIKLLNSSQTATISLADGTEAFKCYVSQQAAYLYENTTFTCTAQNDLSSYNTIDGSITFSLNFSDGGSSYEYELENAKFFKSGPMLVKLGNQMSDVVNFDPAAFTENVFHSGRSTGYGSFESYHLGMYCPNGYFLGGTEKIDYDSSNNNVDLDCSSVQVYSSNDFNDWWFPQSYNDTNADVTCFGSNLWITLDEKLYDGEMLWVNALQSLPANVNTIDHALEFQYTCLDTIANTTYATQFSTTREFIVYQGRNLGTASAKSSFISTTTTDLTSINTSAYSTGSISTVETGNRTTSEVISHVVTTSTKLSPTATTSLTIAQTSIYSTDSNITVGTDIHTTSEVISDVETISRETASTVVAAPTSTTGWTGAMNTYISQFTSSSFATINSTPIISSSAVFETSDASIVNVHTENITNTAAVPSEEPTFVNATRNSLNSFCSSKQPSSPSSYTSSPLVSSLSVSKTLLSTSFTPSVPTSNTYIKTKNTGYFEHTALTTSSVGLNSFSETAVSSQGTKIDTFLVSSLIAYPSSASGSQLSGIQQNFTSTSLMISTYEGKASIFFSAELGSIIFLLLSYLLF.

Residues 1–19 form the signal peptide; sequence MFTFLKIILWLFSLALASA. 4 N-linked (GlcNAc...) asparagine glycosylation sites follow: Asn79, Asn109, Asn135, and Asn248. A disulfide bond links Cys97 and Cys114. The cysteines at positions 202 and 300 are disulfide-linked. Residues 216 to 322 form an ig-like fold domain important for alpha-agglutinin activity, contributing to a functional binding site for a-agglutinin region; sequence YDSSNNNVDL…FSTTREFIVY (107 aa). Residue Ser282 is glycosylated (O-linked (Man...) serine). Thr289, Thr299, and Thr303 each carry an O-linked (Man...) threonine glycan. Residue Asn306 is glycosylated (N-linked (GlcNAc...) asparagine). 3 O-linked (Man...) threonine glycosylation sites follow: Thr307, Thr308, and Thr311. A glycan (O-linked (Man...) serine) is linked at Ser314. O-linked (Man...) threonine glycans are attached at residues Thr315, Thr316, and Thr329. Residues Ser331, Ser334, Ser335, and Ser338 are each glycosylated (O-linked (Man...) serine). Thr339, Thr340, Thr341, Thr342, and Thr345 each carry an O-linked (Man...) threonine glycan. A run of 2 repeats spans residues 339–378 and 384–423. The segment at 339–423 is 2 X 40 AA tandem repeats; sequence TTTTDLTSIN…EVISDVETIS (85 aa). Ser346 is a glycosylation site (O-linked (Man...) serine). O-linked (Man...) threonine glycosylation occurs at Thr349. A glycan (O-linked (Man...) serine) is linked at Ser350. 5 N-linked (GlcNAc...) asparagine glycosylation sites follow: Asn364, Asn402, Asn485, Asn501, and Asn614. Gly627 carries the GPI-anchor amidated glycine lipid modification. Positions 628–650 are cleaved as a propeptide — removed in mature form; that stretch reads KASIFFSAELGSIIFLLLSYLLF.

To C.albicans ALS1. In terms of assembly, interacts with AGA2. Post-translationally, N-glycosylated, and O-glycosylated by both PMT1 and PMT2. The GPI-anchor is attached to the protein in the endoplasmic reticulum and serves to target the protein to the cell surface. There, the glucosamine-inositol phospholipid moiety is cleaved off and the GPI-modified mannoprotein is covalently attached via its lipidless GPI glycan remnant to the 1,6-beta-glucan of the outer cell wall layer.

It is found in the secreted. It localises to the cell wall. The protein localises to the membrane. Its function is as follows. Cell surface glycoprotein promoting cell-cell contact to facilitate mating. S.cerevisiae A and alpha cells express the complementary cell surface glycoproteins A-agglutinin and alpha-, respectively, which interact with one another to promote cellular aggregation during mating. The sequence is that of Alpha-agglutinin (SAG1) from Saccharomyces cerevisiae (strain ATCC 204508 / S288c) (Baker's yeast).